Reading from the N-terminus, the 394-residue chain is Uroporphyrinogen decarboxylase 2, chloroplastic (394 aa).

Substrate-binding positions include 74–78 (RQAGR), Phe-93, Ser-123, Asp-124, Tyr-201, Ser-256, and His-371.

Belongs to the uroporphyrinogen decarboxylase family. Homodimer.

The protein resides in the plastid. It localises to the chloroplast. The catalysed reaction is uroporphyrinogen III + 4 H(+) = coproporphyrinogen III + 4 CO2. The protein operates within porphyrin-containing compound metabolism; protoporphyrin-IX biosynthesis; coproporphyrinogen-III from 5-aminolevulinate: step 4/4. Its pathway is porphyrin-containing compound metabolism; chlorophyll biosynthesis. Catalyzes the decarboxylation of four acetate groups of uroporphyrinogen-III to yield coproporphyrinogen-III. In Arabidopsis thaliana (Mouse-ear cress), this protein is Uroporphyrinogen decarboxylase 2, chloroplastic (HEME2).